Consider the following 225-residue polypeptide: 3-dehydroquinate dehydratase (225 aa).

3-dehydroquinate-binding positions include 30–32 (EWR) and Arg-62. Residue His-118 is the Proton donor/acceptor of the active site. Lys-143 serves as the catalytic Schiff-base intermediate with substrate. Positions 186, 205, and 209 each coordinate 3-dehydroquinate.

It belongs to the type-I 3-dehydroquinase family. In terms of assembly, homodimer.

The enzyme catalyses 3-dehydroquinate = 3-dehydroshikimate + H2O. Its pathway is metabolic intermediate biosynthesis; chorismate biosynthesis; chorismate from D-erythrose 4-phosphate and phosphoenolpyruvate: step 3/7. Functionally, involved in the third step of the chorismate pathway, which leads to the biosynthesis of aromatic amino acids. Catalyzes the cis-dehydration of 3-dehydroquinate (DHQ) and introduces the first double bond of the aromatic ring to yield 3-dehydroshikimate. The polypeptide is 3-dehydroquinate dehydratase (Streptococcus thermophilus (strain ATCC BAA-491 / LMD-9)).